Consider the following 852-residue polypeptide: Bifunctional uridylyltransferase/uridylyl-removing enzyme (852 aa).

The tract at residues 1 to 318 (MPENLSSALE…STPVRVTLRI (318 aa)) is uridylyltransferase. A uridylyl-removing region spans residues 319–672 (DDDYIQVNNQ…SRILPQSDSF (354 aa)). An HD domain is found at 436 to 558 (VDDHILAVVR…VQTHERLSAL (123 aa)). ACT domains are found at residues 673 to 757 (QVMV…SCNR) and 785 to 852 (SVEI…EQLA).

Belongs to the GlnD family. Requires Mg(2+) as cofactor.

It catalyses the reaction [protein-PII]-L-tyrosine + UTP = [protein-PII]-uridylyl-L-tyrosine + diphosphate. It carries out the reaction [protein-PII]-uridylyl-L-tyrosine + H2O = [protein-PII]-L-tyrosine + UMP + H(+). With respect to regulation, uridylyltransferase (UTase) activity is inhibited by glutamine, while glutamine activates uridylyl-removing (UR) activity. In terms of biological role, modifies, by uridylylation and deuridylylation, the PII regulatory proteins (GlnB and homologs), in response to the nitrogen status of the cell that GlnD senses through the glutamine level. Under low glutamine levels, catalyzes the conversion of the PII proteins and UTP to PII-UMP and PPi, while under higher glutamine levels, GlnD hydrolyzes PII-UMP to PII and UMP (deuridylylation). Thus, controls uridylylation state and activity of the PII proteins, and plays an important role in the regulation of nitrogen assimilation and metabolism. This Neisseria gonorrhoeae (strain ATCC 700825 / FA 1090) protein is Bifunctional uridylyltransferase/uridylyl-removing enzyme.